Here is an 834-residue protein sequence, read N- to C-terminus: Putative COX1/OXI3 intron 1 protein (834 aa).

A disordered region spans residues 162 to 188 (MKDTNNTKGNTKSEGSTERGNSGVDRG). Positions 167-181 (NTKGNTKSEGSTERG) are enriched in polar residues. One can recognise a Reverse transcriptase domain in the interval 296–577 (LSNELGTGKF…TPARFLGYNI (282 aa)).

The protein resides in the mitochondrion. In Saccharomyces cerevisiae (strain ATCC 204508 / S288c) (Baker's yeast), this protein is Putative COX1/OXI3 intron 1 protein (AI1).